The primary structure comprises 406 residues: Cholinephosphotransferase 1 (406 aa).

Alanine 2 is subject to N-acetylalanine. Over 2 to 62 (AAGAGAGSAP…LLQWIPLWMA (61 aa)) the chain is Cytoplasmic. The chain crosses the membrane as a helical span at residues 63–83 (PNSITLLGLAVNVVTTLVLIS). CDP-choline is bound at residue asparagine 64. At 84–93 (YCPTATEEAP) the chain is on the lumenal side. Residues 94–118 (YWTYLLCALGLFIYQSLDAIDGKQA) traverse the membrane as a helical segment. Residues aspartate 111 and aspartate 114 each coordinate Mg(2+). CDP-choline is bound at residue arginine 119. Residues 119-125 (RRTNSCS) lie on the Cytoplasmic side of the membrane. The chain crosses the membrane as a helical span at residues 126 to 150 (PLGELFDHGCDSLSTVFMAVGASIA). Aspartate 132 is a binding site for Mg(2+). Histidine 133 functions as the Proton acceptor in the catalytic mechanism. Aspartate 136 is a binding site for Mg(2+). The Lumenal portion of the chain corresponds to 151-160 (ARLGTYPDWF). Residues 161 to 179 (FFCSFIGMFVFYCAHWQTY) traverse the membrane as a helical segment. At 180–190 (VSGMLRFGKVD) the chain is on the cytoplasmic side. The chain crosses the membrane as a helical span at residues 191 to 207 (VTEIQIALVIVFVLSAF). Over 208–222 (GGATMWDYTIPILEI) the chain is Lumenal. A helical transmembrane segment spans residues 223 to 248 (KLKILPVLGFLGGVIFSCSNYFHVIL). The Cytoplasmic segment spans residues 249 to 265 (HGGVGKNGSTIAGTSVL). The helical transmembrane segment at 266-281 (SPGLHIGLIIILAIMI) threads the bilayer. Topologically, residues 282-293 (YKKSATDVFEKH) are lumenal. The helical transmembrane segment at 294 to 316 (PCLYILMFGCVFAKVSQKLVVAH) threads the bilayer. Residues 317 to 329 (MTKSELYLQDTVF) are Cytoplasmic-facing. Residues 330 to 339 (LGPGLLFLDQ) form a helical membrane-spanning segment. Residues 340 to 346 (YFNNFID) are Lumenal-facing. Residues 347–376 (EYVVLWMAMVISSFDMVIYFSALCLQISRH) form a helical membrane-spanning segment. Topologically, residues 377–406 (LHLNIFKTACHQAPEQVQVLSSKSHQNNMD) are cytoplasmic.

This sequence belongs to the CDP-alcohol phosphatidyltransferase class-I family. Mg(2+) is required as a cofactor. It depends on Mn(2+) as a cofactor. Highly expressed in testis, colon, small intestine, heart, prostate and spleen. Also detected in kidney, skeletal muscle, pancreas, leukocytes, ovary and thymus. Weakly expressed in the brain, placenta and lung. Overexpressed in cancerous breast epithelial cell lines.

It is found in the golgi apparatus membrane. The catalysed reaction is CDP-choline + a 1,2-diacyl-sn-glycerol = a 1,2-diacyl-sn-glycero-3-phosphocholine + CMP + H(+). It carries out the reaction 1-octadecanoyl-2-(5Z,8Z,11Z,14Z-eicosatetraenoyl)-sn-glycerol + CDP-choline = 1-octadecanoyl-2-(5Z,8Z,11Z,14Z-eicosatetraenoyl)-sn-glycero-3-phosphocholine + CMP + H(+). The enzyme catalyses 1-hexadecanoyl-2-(9Z-octadecenoyl)-sn-glycerol + CDP-choline = 1-hexadecanoyl-2-(9Z-octadecenoyl)-sn-glycero-3-phosphocholine + CMP + H(+). It catalyses the reaction 1-hexadecanoyl-2-(4Z,7Z,10Z,13Z,16Z,19Z-docosahexaenoyl)-sn-glycerol + CDP-choline = 1-hexadecanoyl-2-(4Z,7Z,10Z,13Z,16Z,19Z-docosahexaenoyl)-sn-glycero-3-phosphocholine + CMP + H(+). The catalysed reaction is 1,2-dioctanoyl-sn-glycerol + CDP-choline = 1,2-dioctanoyl-sn-glycero-3-phosphocholine + CMP + H(+). Its pathway is phospholipid metabolism; phosphatidylcholine biosynthesis; phosphatidylcholine from phosphocholine: step 2/2. In terms of biological role, catalyzes the final step of de novo phosphatidylcholine (PC) synthesis, i.e. the transfer of choline phosphate from CDP-choline to the free hydroxyl of a diacylglycerol (DAG), producing a PC. It thereby plays a central role in the formation and maintenance of vesicular membranes. This Homo sapiens (Human) protein is Cholinephosphotransferase 1.